Reading from the N-terminus, the 479-residue chain is Sodium-coupled neutral amino acid transporter 5 (479 aa).

Topologically, residues 1 to 61 (MAISCAVGME…LDFEGKTSFG (61 aa)) are cytoplasmic. Residues 62-84 (MSVFNLSNAIMGSGILGLAYAMA) form a helical membrane-spanning segment. Residues 85 to 97 (HTGVIFFLALLLC) lie on the Extracellular side of the membrane. The chain crosses the membrane as a helical span at residues 98–118 (IALLSSYSIHLLLTCASVVGI). Residues 119-135 (RAYEQLGQRAFGPAGKV) lie on the Cytoplasmic side of the membrane. Residues 136–156 (VVAIIICLHNVGAMSSYLFII) form a helical membrane-spanning segment. Over 157–176 (KSELPLVIGTFLHMDPEGDW) the chain is Extracellular. A helical transmembrane segment spans residues 177-197 (FLKGNLLIILVSLLIILPLAL). Over 198-202 (MKHLG) the chain is Cytoplasmic. The chain crosses the membrane as a helical span at residues 203 to 223 (YLGYTSSLSLTCMLFFLISVI). At 224–264 (YKKFQIGCDVSHNDTVVEAEQAPLQAFNSSCEAELFTVDSQ) the chain is on the extracellular side. C231 and C254 are joined by a disulfide. A glycan (N-linked (GlcNAc...) asparagine) is linked at N236. The helical transmembrane segment at 265 to 285 (MSYTVPIMAFAFVCHPEVLPI) threads the bilayer. The Cytoplasmic portion of the chain corresponds to 286-302 (YTELCRPTQRRMQAVAN). Residues 303-323 (MSIGAMFIMYGLTATFGYLTF) traverse the membrane as a helical segment. At 324 to 341 (YSTVKAEMLEMYTQEDML) the chain is on the extracellular side. The helical transmembrane segment at 342-362 (ILCVRLAVLLAVTLTVPVVLF) threads the bilayer. Topologically, residues 363–383 (PIRRALQQLLFPSKAFSWLRH) are cytoplasmic. The chain crosses the membrane as a helical span at residues 384-404 (VAIALILLILVNILVICVPTI). Over 405 to 406 (RD) the chain is Extracellular. The chain crosses the membrane as a helical span at residues 407–427 (IFGFIGSTSAPSLIFILPSVF). The Cytoplasmic portion of the chain corresponds to 428-446 (YLRIVPTEVEPLFSWPKIQ). The chain crosses the membrane as a helical span at residues 447–467 (ALCFGVLGVLFMAISLGFMFA). Topologically, residues 468–479 (NWATGQSRMSGH) are extracellular.

This sequence belongs to the amino acid/polyamine transporter 2 family. Expressed in the ganglion cell layer and the nerve fiber layer (at protein level). Also expreseed in the cells of the inner nuclear layer and in the inner plexiform layer (at protein level). Expressed in Mueller and ganglion retinal cell.

It localises to the cell membrane. The catalysed reaction is L-glutamine(out) + Na(+)(out) + H(+)(in) = L-glutamine(in) + Na(+)(in) + H(+)(out). It carries out the reaction L-serine(out) + Na(+)(out) + H(+)(in) = L-serine(in) + Na(+)(in) + H(+)(out). The enzyme catalyses L-alanine(out) + Na(+)(out) + H(+)(in) = L-alanine(in) + Na(+)(in) + H(+)(out). It catalyses the reaction glycine(out) + Na(+)(out) + H(+)(in) = glycine(in) + Na(+)(in) + H(+)(out). The catalysed reaction is L-asparagine(out) + Na(+)(out) + H(+)(in) = L-asparagine(in) + Na(+)(in) + H(+)(out). It carries out the reaction L-histidine(out) + Na(+)(out) + H(+)(in) = L-histidine(in) + Na(+)(in) + H(+)(out). The enzyme catalyses L-cysteine(out) + Na(+)(out) + H(+)(in) = L-cysteine(in) + Na(+)(in) + H(+)(out). Its activity is regulated as follows. Not inhibited by lithium. Partial allosteric regulation on ions sodium binding. Its function is as follows. Symporter that cotransports neutral amino acids and sodium ions, coupled to an H(+) antiporter activity. Releases L-glutamine and glycine from astroglial cells and may participate in the glutamate/GABA-L-glutamine cycle and the NMDA receptors activation. In addition, contributes significantly to L-glutamine uptake in retina, namely in ganglion and Mueller cells therefore, participates in the retinal glutamate-glutamine cycle. The transport activity is pH sensitive, Li(+) tolerant, bidirectional and associated with large uncoupled fluxes of protons. Moreover functions in both direction and is associated with large uncoupled fluxes of protons. The transport is electroneutral coupled to the cotransport of 1 Na(+) and the antiport of 1 H(+). May have a particular importance for modulation of net hepatic glutamine flux. This Mus musculus (Mouse) protein is Sodium-coupled neutral amino acid transporter 5.